The following is a 187-amino-acid chain: Protein GrpE (187 aa).

Belongs to the GrpE family. As to quaternary structure, homodimer.

It is found in the cytoplasm. Functionally, participates actively in the response to hyperosmotic and heat shock by preventing the aggregation of stress-denatured proteins, in association with DnaK and GrpE. It is the nucleotide exchange factor for DnaK and may function as a thermosensor. Unfolded proteins bind initially to DnaJ; upon interaction with the DnaJ-bound protein, DnaK hydrolyzes its bound ATP, resulting in the formation of a stable complex. GrpE releases ADP from DnaK; ATP binding to DnaK triggers the release of the substrate protein, thus completing the reaction cycle. Several rounds of ATP-dependent interactions between DnaJ, DnaK and GrpE are required for fully efficient folding. The sequence is that of Protein GrpE from Albidiferax ferrireducens (strain ATCC BAA-621 / DSM 15236 / T118) (Rhodoferax ferrireducens).